Consider the following 150-residue polypeptide: Protein-arginine-phosphatase (150 aa).

Cys-7 functions as the Nucleophile in the catalytic mechanism. 8–13 (TGNTCR) is a binding site for substrate. Arg-13 is an active-site residue. Asp-118 acts as the Proton donor/acceptor in catalysis.

This sequence belongs to the low molecular weight phosphotyrosine protein phosphatase family.

The enzyme catalyses N(omega)-phospho-L-arginyl-[protein] + H2O = L-arginyl-[protein] + phosphate. With respect to regulation, efficiently inhibited by Cu(2+) ion, Zn(2+) ion, sodium pyrophosphate and N-ethylmaleimide, while the addition of Mg(2+), Ca(2+) or Fe(3+) ions has minimal effect. Inhibited in a competitive manner by vanadate. In terms of biological role, catalyzes the specific dephosphorylation of phosphoarginine residues in a large number of proteins. Counteracts the protein arginine kinase McsB in vivo. Can dephosphorylate CtsR-P; thus, can restore the DNA-binding ability of the CtsR repressor by reversing the McsB-mediated phosphorylation. Is the only active pArg phosphatase present in B.subtilis. Exhibits almost no activity against pSer, pThr, or pTyr peptides. Appears to play a role in B.subtilis stress resistance. Protein arginine phosphorylation has a physiologically important role and is involved in the regulation of many critical cellular processes, such as protein homeostasis, motility, competence, and stringent and stress responses, by regulating gene expression and protein activity. In Bacillus subtilis (strain 168), this protein is Protein-arginine-phosphatase (ywlE).